The sequence spans 298 residues: Mitochondrial 2-oxodicarboxylate carrier (298 aa).

Solcar repeat units follow at residues 10 to 99, 106 to 195, and 204 to 293; these read HETC…YKKF, SPGL…VKDN, and LEFL…TYAW. 6 helical membrane-spanning segments follow: residues 16 to 36, 69 to 88, 112 to 132, 166 to 186, 204 to 224, and 276 to 296; these read VAAGGCAGLVEICLMHPLDVV, FGFYKGIIPPILAETPKRAV, PIAGLGSGLTEAVVVNPFEVV, GLNKGFTATLGRHGIFNMTYF, LEFLRKFGIGFVSGTVGSVFN, and LGPGGGVMLLVYEYTYAWLQE.

It belongs to the mitochondrial carrier (TC 2.A.29) family. Widely expressed.

It is found in the mitochondrion inner membrane. It catalyses the reaction 2-oxoadipate(in) + 2-oxoglutarate(out) = 2-oxoadipate(out) + 2-oxoglutarate(in). The enzyme catalyses hexanedioate(in) + 2-oxoglutarate(out) = hexanedioate(out) + 2-oxoglutarate(in). It carries out the reaction L-2-aminoadipate(in) + 2-oxoglutarate(out) = L-2-aminoadipate(out) + 2-oxoglutarate(in). The catalysed reaction is glutarate(in) + 2-oxoglutarate(out) = glutarate(out) + 2-oxoglutarate(in). It catalyses the reaction 2-oxoheptanedioate(in) + 2-oxoglutarate(out) = 2-oxoheptanedioate(out) + 2-oxoglutarate(in). The enzyme catalyses heptanedioate(in) + 2-oxoglutarate(out) = heptanedioate(out) + 2-oxoglutarate(in). It carries out the reaction citrate(in) + 2-oxoglutarate(out) = citrate(out) + 2-oxoglutarate(in). Functionally, transports dicarboxylates across the inner membranes of mitochondria by a counter-exchange mechanism. Can transport 2-oxoadipate (2-oxohexanedioate), 2-oxoglutarate, adipate (hexanedioate), glutarate, and to a lesser extent, pimelate (heptanedioate), 2-oxopimelate (2-oxoheptanedioate), 2-aminoadipate (2-aminohexanedioate), oxaloacetate, and citrate. Plays a central role in catabolism of lysine, hydroxylysine, and tryptophan, by transporting common metabolite intermediates (such as 2-oxoadipate) into the mitochondria, where it is converted into acetyl-CoA and can enter the citric acid (TCA) cycle. In Rattus norvegicus (Rat), this protein is Mitochondrial 2-oxodicarboxylate carrier (Slc25a21).